The primary structure comprises 938 residues: Protein O-mannosyl-transferase Tmtc2 (938 aa).

Residue methionine 1 is a topological domain, cytoplasmic. The helical transmembrane segment at 2–22 (PSLEPWLWGDSCSWLGMLAML) threads the bilayer. Over 23–34 (RLRLHKSNMDFT) the chain is Extracellular. Residues 35–55 (CLFCCSLAFVLYLNTLGAGFV) form a helical membrane-spanning segment. Over 56-108 (YDDRRAILANADVSGGTPWQRSFSNDFWGTPLTDSGSHGSWRPLCVLSFRLNY) the chain is Cytoplasmic. The chain crosses the membrane as a helical span at residues 109–129 (LIGGGFAPWGFHLVNNLLHCV). The Extracellular portion of the chain corresponds to 130–139 (ATALVVRVAR). The chain crosses the membrane as a helical span at residues 140–160 (TLLASVWAVLAAGALFAAHPI). Topologically, residues 161–164 (HTEA) are cytoplasmic. Residues 165–185 (VAGVVGRADLAACVCYLLTYL) form a helical membrane-spanning segment. Residues 186–208 (SYLRHMRWRESGDPRQWLALGAT) lie on the Extracellular side of the membrane. A helical transmembrane segment spans residues 209-229 (LILAAAGLLCKETAITALLVC). Topologically, residues 230-249 (ALFDVMRGLSGQVDKQRLRS) are cytoplasmic. The helical transmembrane segment at 250 to 270 (VCIVLGALFCMAYCRLVIVPG) threads the bilayer. At 271-291 (PQTAFSSADNPIARTPSAWTR) the chain is on the extracellular side. A helical transmembrane segment spans residues 292–312 (LLTFLYLPVFNLRLLLQPNVL). Topologically, residues 313–510 (SFDWGMDALP…HACVLIMSLS (198 aa)) are cytoplasmic. The interval 450 to 480 (RSSSSCSNSTNSSSSSSSSSSSSSSSSSSLS) is disordered. The helical transmembrane segment at 511–531 (FLALPFLPASNLLFYVGFVVA) threads the bilayer. Residues 532-533 (ER) are Extracellular-facing. The helical transmembrane segment at 534 to 554 (LLYLPSVGFCLLVGYGVSKLM) threads the bilayer. Topologically, residues 555 to 562 (SCNQRTRN) are cytoplasmic. Residues 563 to 580 (ILLLSFSLLLAAMSLRTL) traverse the membrane as a helical segment. Over 581–938 (RRNADWRDEE…NLAKLGVTNV (358 aa)) the chain is Extracellular. TPR repeat units lie at residues 602-635 (PKALGNLGSVLSSQGRYEEAKQVLQEAIRFRPNM), 636-669 (ADVHFNLGILHQNQQVYPAAVECFQRAIKFRPNL), 670-703 (AVAYLNLGISFIALGKRQQAIEILQAGSNLDGAA), 715-748 (SSAYLQLGALYVEQGKLQRALAIYREALSSLPGL), 753-786 (EILYQRIGDVLGRLQQWDEAERHHRAALELQPNQ), 788-821 (AAHLSYGITLARNSSRASEAEMWFKRALKLAPEQ), 822-855 (ASVYHHYAEFLSLQSRHHESAIYHRRAAELAPND), 856-889 (YTLVVAAATAMRLLDRKVDAEMWYRKAVALRPGD), and 890-923 (AHAHTNLGAILHLLGRTNHAAASYKAALRLQPGD). An N-linked (GlcNAc...) asparagine glycan is attached at asparagine 800.

Belongs to the TMTC family.

The protein localises to the membrane. The protein resides in the endoplasmic reticulum. It catalyses the reaction a di-trans,poly-cis-dolichyl beta-D-mannosyl phosphate + L-seryl-[protein] = 3-O-(alpha-D-mannosyl)-L-seryl-[protein] + a di-trans,poly-cis-dolichyl phosphate + H(+). The catalysed reaction is a di-trans,poly-cis-dolichyl beta-D-mannosyl phosphate + L-threonyl-[protein] = 3-O-(alpha-D-mannosyl)-L-threonyl-[protein] + a di-trans,poly-cis-dolichyl phosphate + H(+). The protein operates within protein modification; protein glycosylation. In terms of biological role, transfers mannosyl residues to the hydroxyl group of serine or threonine residues. This chain is Protein O-mannosyl-transferase Tmtc2, found in Drosophila melanogaster (Fruit fly).